The primary structure comprises 180 residues: NAD(P)H-quinone oxidoreductase subunit I, chloroplastic (180 aa).

2 consecutive 4Fe-4S ferredoxin-type domains span residues 55-84 (GRIH…VDWR) and 95-124 (LNYS…MTEE). [4Fe-4S] cluster-binding residues include cysteine 64, cysteine 67, cysteine 70, cysteine 74, cysteine 104, cysteine 107, cysteine 110, and cysteine 114.

The protein belongs to the complex I 23 kDa subunit family. As to quaternary structure, NDH is composed of at least 16 different subunits, 5 of which are encoded in the nucleus. It depends on [4Fe-4S] cluster as a cofactor.

Its subcellular location is the plastid. It is found in the chloroplast thylakoid membrane. The enzyme catalyses a plastoquinone + NADH + (n+1) H(+)(in) = a plastoquinol + NAD(+) + n H(+)(out). The catalysed reaction is a plastoquinone + NADPH + (n+1) H(+)(in) = a plastoquinol + NADP(+) + n H(+)(out). Functionally, NDH shuttles electrons from NAD(P)H:plastoquinone, via FMN and iron-sulfur (Fe-S) centers, to quinones in the photosynthetic chain and possibly in a chloroplast respiratory chain. The immediate electron acceptor for the enzyme in this species is believed to be plastoquinone. Couples the redox reaction to proton translocation, and thus conserves the redox energy in a proton gradient. This chain is NAD(P)H-quinone oxidoreductase subunit I, chloroplastic, found in Dioscorea elephantipes (Elephant's foot yam).